Here is a 486-residue protein sequence, read N- to C-terminus: Small ribosomal subunit protein uS4m (486 aa).

Positions 103–172 (KRLDFALFRA…AKKPSFQEAL (70 aa)) constitute an S4 RNA-binding domain.

It belongs to the universal ribosomal protein uS4 family. As to quaternary structure, component of the mitochondrial small ribosomal subunit (mt-SSU). Mature yeast 74S mitochondrial ribosomes consist of a small (37S) and a large (54S) subunit. The 37S small subunit contains a 15S ribosomal RNA (15S mt-rRNA) and 34 different proteins. The 54S large subunit contains a 21S rRNA (21S mt-rRNA) and 46 different proteins. uS3m, uS4m and uS5m form the narrow entry site of the mRNA channel.

It is found in the mitochondrion. Component of the mitochondrial ribosome (mitoribosome), a dedicated translation machinery responsible for the synthesis of mitochondrial genome-encoded proteins, including at least some of the essential transmembrane subunits of the mitochondrial respiratory chain. The mitoribosomes are attached to the mitochondrial inner membrane and translation products are cotranslationally integrated into the membrane. The sequence is that of Small ribosomal subunit protein uS4m (NAM9) from Saccharomyces cerevisiae (strain ATCC 204508 / S288c) (Baker's yeast).